Reading from the N-terminus, the 104-residue chain is Large ribosomal subunit protein uL24 (104 aa).

Belongs to the universal ribosomal protein uL24 family. Part of the 50S ribosomal subunit.

One of two assembly initiator proteins, it binds directly to the 5'-end of the 23S rRNA, where it nucleates assembly of the 50S subunit. Functionally, one of the proteins that surrounds the polypeptide exit tunnel on the outside of the subunit. The protein is Large ribosomal subunit protein uL24 of Rhodopseudomonas palustris (strain BisB18).